We begin with the raw amino-acid sequence, 1025 residues long: Protein mono-ADP-ribosyltransferase PARP10 (1025 aa).

A Phosphothreonine modification is found at Thr-101. Glu-106 carries the ADP-ribosyl glutamic acid modification. Lys-140 is modified (N6-(ADP-ribosyl)lysine). The tract at residues 318-346 (GIMTTGSGQEPGQSGTSLRTGPMGSLGQA) is disordered. Residues 321-336 (TTGSGQEPGQSGTSLR) are compositionally biased toward polar residues. Phosphoserine occurs at positions 378, 423, and 431. Disordered stretches follow at residues 569 to 589 (VLPGNAHTLWTPDSTGGDQED) and 617 to 644 (LEEEGPQEQPEEEVTPGHEEEEPVAPST). The segment covering 617–639 (LEEEGPQEQPEEEVTPGHEEEEP) has biased composition (acidic residues). Short sequence motifs (ubiquitin-interacting) lie at residues 650-667 (LEEEAALQLALHRSLEPQ) and 673-690 (QEEAAALRQALTLSLLEQ). Residue Ser-663 is modified to Phosphoserine. Residues 700–907 (DGGTDGKAQL…CAHGFNRSFC (208 aa)) form a myc binding region. Residues 806-1025 (PTLAGQTLKG…SGLPGRSPDT (220 aa)) form the PARP catalytic domain. The PIP-box motif lies at 831-838 (QEVVRAFY). Glu-882 is modified (ADP-ribosyl glutamic acid). The residue at position 916 (Lys-916) is an N6-(ADP-ribosyl)lysine. An N6-acetyllysine modification is found at Lys-916. A disordered region spans residues 1006-1025 (HVPRASPDDPSGLPGRSPDT). Ser-1011 is modified (phosphoserine).

Belongs to the ARTD/PARP family. As to quaternary structure, interacts with MYC. Interacts with PARP14. Interacts (via-PIP box and ubiquitin-interacting motifs) with PCNA. In terms of processing, stimulated through its phosphorylation by CDK2. Acquires CDK-dependent phosphorylation through late-G1 to S phase, and from prometaphase to cytokinesis in the nucleolar organizing regions. Phosphorylation is suppressed in growth-arrested cells. Auto-mono-ADP-ribosylated on glutamate and lysine residues. Highly expressed in spleen and thymus. Intermediate levels in liver, kidney, pancreas, prostate, testis, ovary, intestine, and leukocytes. Low expression in heart, brain, placenta, lung, skeletal muscle, and colon.

Its subcellular location is the nucleus. It localises to the nucleolus. The protein localises to the cytoplasm. It catalyses the reaction L-lysyl-[protein] + NAD(+) = N(6)-(ADP-D-ribosyl)-L-lysyl-[protein] + nicotinamide + H(+). The enzyme catalyses L-aspartyl-[protein] + NAD(+) = 4-O-(ADP-D-ribosyl)-L-aspartyl-[protein] + nicotinamide. The catalysed reaction is L-glutamyl-[protein] + NAD(+) = 5-O-(ADP-D-ribosyl)-L-glutamyl-[protein] + nicotinamide. ADP-ribosyltransferase that mediates mono-ADP-ribosylation of glutamate and aspartate residues on target proteins. In contrast to PARP1 and PARP2, it is not able to mediate poly-ADP-ribosylation. Catalyzes mono-ADP-ribosylation of GSK3B, leading to negatively regulate GSK3B kinase activity. Involved in translesion DNA synthesis in response to DNA damage via its interaction with PCNA. This Homo sapiens (Human) protein is Protein mono-ADP-ribosyltransferase PARP10.